The sequence spans 225 residues: MSLIQSFKLVLSPPHRAATPFLLAGSLVGLLGRATPWRPTRLLGNAGIAFTAFCLYFFRDPKRVPPPRADLVLASADGRVTSVALVTPPAALEMGHTPVWRVSTFLSVLNVHINRMPAAGEVTKIAYHAGKFLNASFDKASEHNERNELRLTLPDGRNIGVVQIAGLIARRILCFVEEGDRVEAGERFGLIRFGSRTDVYLPPGVEPLVVEGQTMVGGETVLAKL.

Ser-195 functions as the Schiff-base intermediate with substrate; via pyruvic acid in the catalytic mechanism. Ser-195 bears the Pyruvic acid (Ser); by autocatalysis mark.

The protein belongs to the phosphatidylserine decarboxylase family. PSD-A subfamily. In terms of assembly, heterodimer of a large membrane-associated beta subunit and a small pyruvoyl-containing alpha subunit. Requires pyruvate as cofactor. Post-translationally, is synthesized initially as an inactive proenzyme. Formation of the active enzyme involves a self-maturation process in which the active site pyruvoyl group is generated from an internal serine residue via an autocatalytic post-translational modification. Two non-identical subunits are generated from the proenzyme in this reaction, and the pyruvate is formed at the N-terminus of the alpha chain, which is derived from the carboxyl end of the proenzyme. The post-translation cleavage follows an unusual pathway, termed non-hydrolytic serinolysis, in which the side chain hydroxyl group of the serine supplies its oxygen atom to form the C-terminus of the beta chain, while the remainder of the serine residue undergoes an oxidative deamination to produce ammonia and the pyruvoyl prosthetic group on the alpha chain.

It is found in the cell membrane. The enzyme catalyses a 1,2-diacyl-sn-glycero-3-phospho-L-serine + H(+) = a 1,2-diacyl-sn-glycero-3-phosphoethanolamine + CO2. It participates in phospholipid metabolism; phosphatidylethanolamine biosynthesis; phosphatidylethanolamine from CDP-diacylglycerol: step 2/2. In terms of biological role, catalyzes the formation of phosphatidylethanolamine (PtdEtn) from phosphatidylserine (PtdSer). This Gluconobacter oxydans (strain 621H) (Gluconobacter suboxydans) protein is Phosphatidylserine decarboxylase proenzyme.